The chain runs to 285 residues: tRNA-cytidine(32) 2-sulfurtransferase (285 aa).

A PP-loop motif motif is present at residues 48 to 53 (SGGKDS). [4Fe-4S] cluster contacts are provided by Cys122, Cys125, and Cys213.

This sequence belongs to the TtcA family. As to quaternary structure, homodimer. Mg(2+) is required as a cofactor. [4Fe-4S] cluster serves as cofactor.

The protein localises to the cytoplasm. It catalyses the reaction cytidine(32) in tRNA + S-sulfanyl-L-cysteinyl-[cysteine desulfurase] + AH2 + ATP = 2-thiocytidine(32) in tRNA + L-cysteinyl-[cysteine desulfurase] + A + AMP + diphosphate + H(+). It participates in tRNA modification. In terms of biological role, catalyzes the ATP-dependent 2-thiolation of cytidine in position 32 of tRNA, to form 2-thiocytidine (s(2)C32). The sulfur atoms are provided by the cysteine/cysteine desulfurase (IscS) system. The sequence is that of tRNA-cytidine(32) 2-sulfurtransferase from Cytophaga hutchinsonii (strain ATCC 33406 / DSM 1761 / CIP 103989 / NBRC 15051 / NCIMB 9469 / D465).